Reading from the N-terminus, the 57-residue chain is UPF0391 membrane protein RPC_3278 (57 aa).

Helical transmembrane passes span 4-24 and 30-50; these read WVITFLVVALIAGILGFGGIA and IAKIIFFIAVVLFLVSAVVGL.

This sequence belongs to the UPF0391 family.

It is found in the cell membrane. This chain is UPF0391 membrane protein RPC_3278, found in Rhodopseudomonas palustris (strain BisB18).